A 326-amino-acid polypeptide reads, in one-letter code: Archaeal actin homolog (326 aa).

Residues 10–14 (YGDTK), S179, Q231, 285–288 (GGAN), and Q311 contribute to the ATP site.

The protein belongs to the thermophilic archaeal actin family.

Its function is as follows. Polymerizes into bundles of filaments. Polymerization requires NTP and is optimal with ATP, but GTP, UTP, CTP, and even the deoxy form of NTP can also support the polymerization reaction. In Thermoplasma volcanium (strain ATCC 51530 / DSM 4299 / JCM 9571 / NBRC 15438 / GSS1), this protein is Archaeal actin homolog.